The sequence spans 356 residues: uncharacterized protein (356 aa).

It localises to the cytoplasm. The protein localises to the nucleus. This is an uncharacterized protein from Saccharomyces cerevisiae (strain ATCC 204508 / S288c) (Baker's yeast).